The chain runs to 142 residues: Large ribosomal subunit protein uL22 (142 aa).

Positions 122–142 are disordered; sequence RAEAPEETKPSRGTNKEQKAA.

Belongs to the universal ribosomal protein uL22 family. Part of the 50S ribosomal subunit.

Functionally, this protein binds specifically to 23S rRNA; its binding is stimulated by other ribosomal proteins, e.g. L4, L17, and L20. It is important during the early stages of 50S assembly. It makes multiple contacts with different domains of the 23S rRNA in the assembled 50S subunit and ribosome. The globular domain of the protein is located near the polypeptide exit tunnel on the outside of the subunit, while an extended beta-hairpin is found that lines the wall of the exit tunnel in the center of the 70S ribosome. In Gluconobacter oxydans (strain 621H) (Gluconobacter suboxydans), this protein is Large ribosomal subunit protein uL22.